The following is a 415-amino-acid chain: Peptide chain release factor subunit 1-2 (415 aa).

The protein belongs to the eukaryotic release factor 1 family. In terms of assembly, heterodimer of two subunits, one of which binds GTP.

Its subcellular location is the cytoplasm. In terms of biological role, directs the termination of nascent peptide synthesis (translation) in response to the termination codons UAA, UAG and UGA. The chain is Peptide chain release factor subunit 1-2 from Methanosarcina acetivorans (strain ATCC 35395 / DSM 2834 / JCM 12185 / C2A).